The following is a 103-amino-acid chain: Large ribosomal subunit protein uL24 (103 aa).

The protein belongs to the universal ribosomal protein uL24 family. As to quaternary structure, part of the 50S ribosomal subunit.

One of two assembly initiator proteins, it binds directly to the 5'-end of the 23S rRNA, where it nucleates assembly of the 50S subunit. In terms of biological role, one of the proteins that surrounds the polypeptide exit tunnel on the outside of the subunit. The protein is Large ribosomal subunit protein uL24 of Histophilus somni (strain 129Pt) (Haemophilus somnus).